Reading from the N-terminus, the 126-residue chain is uncharacterized protein (126 aa).

T68 is modified (phosphothreonine).

This is an uncharacterized protein from Pseudomonas aeruginosa (strain UCBPP-PA14).